We begin with the raw amino-acid sequence, 79 residues long: uncharacterized protein (79 aa).

A signal peptide spans 1–33 (MRLIIRAIVLLALVWIGLLMSGYGILVGSKVNA).

This is an uncharacterized protein from Salmonella typhi.